The chain runs to 395 residues: Nickel and cobalt resistance protein CnrB (395 aa).

The helical transmembrane segment at 13–33 threads the bilayer; that stretch reads MIAGVAAVAAAVGFGAAHLPV. The tract at residues 35 to 55 is disordered; it reads EKSPASTQAPEAQKPQSAPVK. Residues 37-50 show a composition bias toward polar residues; that stretch reads SPASTQAPEAQKPQ. The stretch at 140–193 forms a coiled coil; it reads AAERKVAQAKADLARKTYEREASLFQQGVTPRQEMEAAKAALDVAQAEALRAAT.

This sequence belongs to the membrane fusion protein (MFP) (TC 8.A.1) family.

The protein localises to the cell inner membrane. Functionally, the products of the genes cnrA, cnrB, and cnrC are likely to form a membrane-bound protein complex catalyzing an energy-dependent efflux of Ni(2+) and Co(2+). The mechanism of action of the CnrCBA complex may be that of a proton/cation antiporter. This chain is Nickel and cobalt resistance protein CnrB (cnrB), found in Cupriavidus metallidurans (strain ATCC 43123 / DSM 2839 / NBRC 102507 / CH34) (Ralstonia metallidurans).